A 1920-amino-acid polypeptide reads, in one-letter code: rRNA biogenesis protein RRP5 (1920 aa).

The tract at residues 1 to 65 (MVVPQKKFAN…GTSLSKKERE (65 aa)) is disordered. S1 motif domains lie at 128–210 (GMKL…LSLR), 226–291 (GMVF…LSSD), 314–384 (GMMV…LTLS), 400–473 (GDIF…GTLK), 490–557 (GMVT…VTYK), 577–646 (GLVT…LSFM), 661–733 (GSIV…LSSK), 753–822 (NSVV…LSLK), 866–930 (GSLI…LSLR), 958–1031 (EVHQ…LLLD), 1054–1129 (GSVV…LSVK), 1153–1224 (GQCV…LVQR), 1260–1334 (GDIL…LSLR), 1369–1438 (DMGV…VTLK), and 1459–1529 (GDMI…LGMK). 2 disordered regions span residues 1535 to 1555 (NGDD…ECDP) and 1605 to 1652 (TDFD…LEHH). Positions 1620–1652 (NKDEKSKRREKQKDKEEREKKIQAAEGRLLEHH) are enriched in basic and acidic residues. 6 HAT repeats span residues 1651–1683 (HHAP…FMLS), 1685–1722 (ADIE…LENE), 1726–1758 (PPEE…YERT), 1759–1791 (EQYK…SSLK), 1828–1860 (GVAD…QEIR), and 1862–1897 (GEDD…YEKS).

As to expression, highly expressed in flowers and at lower levels in roots, leaves, stems and siliques.

Its subcellular location is the nucleus. It localises to the nucleolus. Functionally, involved in the biogenesis of ribosomal RNA (rRNA). Required for the formation of 5.8S rRNA. Required for normal development of female gametophytes. The chain is rRNA biogenesis protein RRP5 from Arabidopsis thaliana (Mouse-ear cress).